A 356-amino-acid polypeptide reads, in one-letter code: Tungsten-containing aldehyde ferredoxin oxidoreductase cofactor-modifying protein (356 aa).

Positions 1 to 214 (MKYLYLEITS…PIVNELYKIA (214 aa)) constitute a Radical SAM core domain. [4Fe-4S] cluster is bound by residues Cys-12, Cys-16, and Cys-19.

It belongs to the radical SAM superfamily. The cofactor is [4Fe-4S] cluster.

In terms of biological role, involved in the biosynthesis of a molybdopterin-based tungsten cofactor. The sequence is that of Tungsten-containing aldehyde ferredoxin oxidoreductase cofactor-modifying protein (cmo) from Pyrococcus furiosus (strain ATCC 43587 / DSM 3638 / JCM 8422 / Vc1).